The chain runs to 99 residues: Putative pterin-4-alpha-carbinolamine dehydratase (99 aa).

This sequence belongs to the pterin-4-alpha-carbinolamine dehydratase family.

It carries out the reaction (4aS,6R)-4a-hydroxy-L-erythro-5,6,7,8-tetrahydrobiopterin = (6R)-L-erythro-6,7-dihydrobiopterin + H2O. In Bradyrhizobium sp. (strain BTAi1 / ATCC BAA-1182), this protein is Putative pterin-4-alpha-carbinolamine dehydratase.